The primary structure comprises 442 residues: MRFRIYKRKVLILTLVVAACGFVLWSSNGRQRKNDALAPPLLDSEPLRGAGHFAASVGIRRVSNDSAAPLVPAVPRPEVDNLTLRYRSLVYQLNFDQMLRNVDKDGTWSPGELVLVVQVHNRPEYLRLLIDSLRKAQGIREVLVIFSHDFWSAEINSLISSVDFCPVLQVFFPFSIQLYPSEFPGSDPRDCPRDLKKNAALKLGCINAEYPDSFGHYREAKFSQTKHHWWWKLHFVWERVKVLQDYTGLILFLEEDHYLAPDFYHVFKKMWKLKQQECPGCDVLSLGTYTTIRSFYGIADKVDVKTWKSTEHNMGLALTRDAYQKLIECTDTFCTYDDYNWDWTLQYLTLACLPKVWKVLVPQAPRIFHAGDCGMHHKKTCRPSTQSAQIESLLNNNKQYLFPETLVIGEKFPMAAISPPRKNGGWGDIRDHELCKSYRRLQ.

Residues 1–9 (MRFRIYKRK) lie on the Cytoplasmic side of the membrane. A helical; Signal-anchor for type II membrane protein transmembrane segment spans residues 10–29 (VLILTLVVAACGFVLWSSNG). Topologically, residues 30–442 (RQRKNDALAP…ELCKSYRRLQ (413 aa)) are lumenal. N-linked (GlcNAc...) asparagine glycosylation is found at N64 and N81. Substrate contacts are provided by residues 118–122 (QVHNR) and D149. An intrachain disulfide couples C191 to C205. 224-228 (QTKHH) provides a ligand contact to substrate. D256 provides a ligand contact to Mn(2+). C278 and C281 form a disulfide bridge. R293 contacts substrate. 3 cysteine pairs are disulfide-bonded: C329-C352, C334-C435, and C373-C381. H369 serves as a coordination point for Mn(2+).

Belongs to the glycosyltransferase 16 (GT16) protein family. As to quaternary structure, homodimer. Mn(2+) serves as cofactor. Detected in liver (at protein level). Detected in liver, brain, thymus and spleen.

The protein localises to the golgi apparatus membrane. The catalysed reaction is an N(4)-{beta-D-GlcNAc-(1-&gt;2)-alpha-D-Man-(1-&gt;3)-[alpha-D-Man-(1-&gt;6)]-beta-D-Man-(1-&gt;4)-beta-D-GlcNAc-(1-&gt;4)-beta-D-GlcNAc}-L-asparaginyl-[protein] + UDP-N-acetyl-alpha-D-glucosamine = N(4)-{beta-D-GlcNAc-(1-&gt;2)-alpha-D-Man-(1-&gt;3)-[beta-D-GlcNAc-(1-&gt;2)-alpha-D-Man-(1-&gt;6)]-beta-D-Man-(1-&gt;4)-beta-D-GlcNAc-(1-&gt;4)-beta-D-GlcNAc}-L-asparaginyl-[protein] + UDP + H(+). It functions in the pathway protein modification; protein glycosylation. In terms of biological role, plays an essential role in protein N-glycosylation. Catalyzes the transfer of N-acetylglucosamine (GlcNAc) onto the free terminal mannose moiety in the core structure of the nascent N-linked glycan chain, giving rise to the second branch in complex glycans. This is Alpha-1,6-mannosyl-glycoprotein 2-beta-N-acetylglucosaminyltransferase (Mgat2) from Rattus norvegicus (Rat).